Reading from the N-terminus, the 456-residue chain is Nitrogenase molybdenum-iron protein beta chain (456 aa).

Residues Cys-23, Cys-48, Cys-106, and Ser-141 each contribute to the [8Fe-7S] cluster site.

This sequence belongs to the NifD/NifK/NifE/NifN family. As to quaternary structure, tetramer of two alpha and two beta chains. Forms complex with the iron protein (nitrogenase component 2). The cofactor is [8Fe-7S] cluster.

The enzyme catalyses N2 + 8 reduced [2Fe-2S]-[ferredoxin] + 16 ATP + 16 H2O = H2 + 8 oxidized [2Fe-2S]-[ferredoxin] + 2 NH4(+) + 16 ADP + 16 phosphate + 6 H(+). Functionally, this molybdenum-iron protein is part of the nitrogenase complex that catalyzes the key enzymatic reactions in nitrogen fixation. This chain is Nitrogenase molybdenum-iron protein beta chain (nifK2), found in Methanosarcina barkeri.